Here is a 238-residue protein sequence, read N- to C-terminus: Ribosomal RNA small subunit methyltransferase G (238 aa).

Residues glycine 77, phenylalanine 82, 128–129 (AE), and arginine 146 contribute to the S-adenosyl-L-methionine site. Residues 216–238 (KKRQTPKKYPRKPGTPNKEPLLK) are disordered.

The protein belongs to the methyltransferase superfamily. RNA methyltransferase RsmG family.

Its subcellular location is the cytoplasm. Specifically methylates the N7 position of guanine in position 535 of 16S rRNA. This Macrococcus caseolyticus (strain JCSC5402) (Macrococcoides caseolyticum) protein is Ribosomal RNA small subunit methyltransferase G.